Consider the following 320-residue polypeptide: MQMRNTFSWIKEEIIRFIAVSLIIYIITRAPISNAYPIFAQQSYENPREATGRIVCANCHLANKPVDIEVPQAVLPDTVFEAVVRIPYDLQLKQVLANGKKGALNVGAVLILPEGFELAPPDRISPEIKEKISNLSFQSYRPTKKNILVIGPVPGQKYSEITFPILSPDPATKKDVHFLKYPIYVGGNRGRGQIYPDGSKSNNNVYNATSAGIVSKIIRKEKGGYEITIVDASDGRQVVDIIPPGPELLVSEGESIKLDQPLTSNPNVGGFGQGDAEIVLQDPLRVQGLLLFLASIILAQIFLVLKKKQFEKVQLSEMNF.

The N-terminal stretch at 1 to 35 (MQMRNTFSWIKEEIIRFIAVSLIIYIITRAPISNA) is a signal peptide. Residues Tyr36, Cys56, Cys59, and His60 each coordinate heme. The helical transmembrane segment at 286-306 (VQGLLLFLASIILAQIFLVLK) threads the bilayer.

It belongs to the cytochrome f family. As to quaternary structure, the 4 large subunits of the cytochrome b6-f complex are cytochrome b6, subunit IV (17 kDa polypeptide, petD), cytochrome f and the Rieske protein, while the 4 small subunits are PetG, PetL, PetM and PetN. The complex functions as a dimer. Heme is required as a cofactor.

It is found in the plastid. The protein resides in the chloroplast thylakoid membrane. Its function is as follows. Component of the cytochrome b6-f complex, which mediates electron transfer between photosystem II (PSII) and photosystem I (PSI), cyclic electron flow around PSI, and state transitions. The protein is Cytochrome f of Morus indica (Mulberry).